Here is a 430-residue protein sequence, read N- to C-terminus: Enolase (430 aa).

Glutamine 164 contacts (2R)-2-phosphoglycerate. The active-site Proton donor is glutamate 208. Mg(2+) contacts are provided by aspartate 245, glutamate 288, and aspartate 315. Residues lysine 340, arginine 369, serine 370, and lysine 391 each contribute to the (2R)-2-phosphoglycerate site. The active-site Proton acceptor is the lysine 340.

The protein belongs to the enolase family. The cofactor is Mg(2+).

It is found in the cytoplasm. Its subcellular location is the secreted. The protein resides in the cell surface. The enzyme catalyses (2R)-2-phosphoglycerate = phosphoenolpyruvate + H2O. Its pathway is carbohydrate degradation; glycolysis; pyruvate from D-glyceraldehyde 3-phosphate: step 4/5. Catalyzes the reversible conversion of 2-phosphoglycerate (2-PG) into phosphoenolpyruvate (PEP). It is essential for the degradation of carbohydrates via glycolysis. In Pyrococcus furiosus (strain ATCC 43587 / DSM 3638 / JCM 8422 / Vc1), this protein is Enolase.